An 854-amino-acid polypeptide reads, in one-letter code: MAELSANYNYLENEPKWQDDWQKKNIYQWNSTLPKDKTFIVDPPPPTVSGDLHIGHAMSFIQLDCIVRYQRMLGKNIFFPIGFDDNGLPTERFVEKIKNVRASNIARPDFIKMCQEVVIAKEGEFCKFLNAIGLSVDWSLKYQTISSLSCKISQMSFLDLVNKNQVYRNHQPVLWDCIDQTALSQADVEDKERITSMYYIAFAVMNSELKVQIATTRPEMLPACCAIFFNPNDIRYQHLHNQFAITPLFKSVVPILAEETVDINKGSGLVMCCTFGDTKDVAWWRKHNLPTRIIIDYYGKVKPLDFTVSSQNQEKFTEYYNQITGLKIAQARNKVVELLHHNQLIIKQEQISQTVKQAERSGAILEIIMAPQWFIKVVEHKDALLQKSQELEWYPKSMKIKLDNWINSLAWDWCISRQRYFGIPFPVWYSKREGEEGKIIFADISQLPVDPLYDLPAGYSKDEVIPDSDVMDTWATSSLSPQLSSHGISSNLTIDSTRHNQLFPADLRSQAHEIIRTWTFYTIVKSYLHQNSLPWSKIMISGWCLADDRKKMSKSKGNIILPTELIKRYGADAVRYWALTSQLGHDCVVSEQVIGIGKKLVNKLWNAARFILQHITGKLTAEFLISAKHCVEKKVISCTTDLWMLSKLQDTVNNTSNLLNNYEYASARLYVEEFFLKDFCDNYLELVKSRIYDHSSEYQKSAIYSVFWGLKTILELFAPFVPFITEELYAAIYQSNNLCNGSIHSSNKWPLAQNFYNDELILTTGNLAINILTLVRKSKSARKLSVKAPISLLQVKYDSDSYQQLPSDLVDDLKLVTNSNEFSIVTNFTTIDDLITGDGITVNIVYPGSMKHEC.

Positions 46-56 match the 'HIGH' region motif; sequence PTVSGDLHIGH. The 'KMSKS' region signature appears at 551–555; sequence KMSKS. Residue K554 participates in ATP binding.

The protein belongs to the class-I aminoacyl-tRNA synthetase family. ValS type 2 subfamily. As to quaternary structure, monomer.

The protein resides in the cytoplasm. The enzyme catalyses tRNA(Val) + L-valine + ATP = L-valyl-tRNA(Val) + AMP + diphosphate. In terms of biological role, catalyzes the attachment of valine to tRNA(Val). As ValRS can inadvertently accommodate and process structurally similar amino acids such as threonine, to avoid such errors, it has a 'posttransfer' editing activity that hydrolyzes mischarged Thr-tRNA(Val) in a tRNA-dependent manner. This is Valine--tRNA ligase from Orientia tsutsugamushi (strain Boryong) (Rickettsia tsutsugamushi).